A 470-amino-acid chain; its full sequence is Probable glycosyltransferase At3g07620 (470 aa).

Over 1 to 7 the chain is Cytoplasmic; it reads MRDYIPK. A helical; Signal-anchor transmembrane segment spans residues 8–28; the sequence is YLNAFLLAFATFAVGFAIFIA. At 29 to 470 the chain is on the lumenal side; the sequence is KDSNSSSHLY…WLRRLNVKLL (442 aa). N-linked (GlcNAc...) asparagine glycosylation is found at N32, N73, N105, N236, N274, and N299.

This sequence belongs to the glycosyltransferase 47 family.

It localises to the golgi apparatus membrane. In terms of biological role, may be involved in cell wall biosynthesis. In Arabidopsis thaliana (Mouse-ear cress), this protein is Probable glycosyltransferase At3g07620.